Consider the following 645-residue polypeptide: Envelope glycoprotein (645 aa).

The N-terminal stretch at Met1–Val33 is a signal peptide. The interval Ser32–Pro237 is receptor-binding domain (RBD). Over Gln34–Leu585 the chain is Extracellular. Residues Asn43 and Asn58 are each glycosylated (N-linked (GlcNAc...) asparagine; by host). 2 disulfide bridges follow: Cys113–Cys130 and Cys122–Cys135. The tract at residues Arg260–Thr285 is disordered. An N-linked (GlcNAc...) asparagine; by host glycan is attached at Asn301. Intrachain disulfides connect Cys311/Cys314, Cys311/Cys538, Cys341/Cys395, Cys360/Cys372, Cys402/Cys415, and Cys530/Cys537. A CXXC motif is present at residues Cys311–Cys314. Residues Asn333 and Asn340 are each glycosylated (N-linked (GlcNAc...) asparagine; by host). 2 N-linked (GlcNAc...) asparagine; by host glycosylation sites follow: Asn373 and Asn409. The tract at residues Val447–Val467 is fusion peptide. A coiled-coil region spans residues Asp490 to Glu510. Positions Leu513 to Leu529 are immunosuppression. A CX6CC motif is present at residues Cys530–Cys538. A helical membrane pass occupies residues Ile586 to Ile606. The S-palmitoyl cysteine; by host moiety is linked to residue Cys605. The Cytoplasmic portion of the chain corresponds to Leu607–Glu640. The YXXL motif; contains endocytosis signal motif lies at Tyr630–Leu633.

The mature envelope protein (Env) consists of a trimer of SU-TM heterodimers attached by a labile interchain disulfide bond. The activated Env consists of SU monomers and TM trimers. Post-translationally, specific enzymatic cleavages in vivo yield mature proteins. Envelope glycoproteins are synthesized as an inactive precursor that is N-glycosylated and processed likely by host cell furin or by a furin-like protease in the Golgi to yield the mature SU and TM proteins. The cleavage site between SU and TM requires the minimal sequence [KR]-X-[KR]-R. The R-peptide is released from the C-terminus of the cytoplasmic tail of the TM protein upon particle formation as a result of proteolytic cleavage by the viral protease. Cleavage of this peptide is required for TM to become fusogenic. In terms of processing, the CXXC motif is highly conserved across a broad range of retroviral envelope proteins. It is thought to participate in the formation of a labile disulfide bond possibly with the CX6CC motif present in the transmembrane protein. Isomerization of the intersubunit disulfide bond to an SU intrachain disulfide bond is thought to occur upon receptor recognition in order to allow membrane fusion. The transmembrane protein is palmitoylated. Post-translationally, the R-peptide is palmitoylated.

The protein localises to the virion membrane. Its subcellular location is the host cell membrane. In terms of biological role, the surface protein (SU) attaches the virus to the host cell by binding to its receptor. This interaction activates a thiol in a CXXC motif of the C-terminal domain, where the other Cys residue participates in the formation of the intersubunit disulfide. The activated thiol will attack the disulfide and cause its isomerization into a disulfide isomer within the motif. This leads to SU displacement and TM refolding, and is thought to activate its fusogenic potential by unmasking its fusion peptide. Fusion occurs at the host cell plasma membrane. The transmembrane protein (TM) acts as a class I viral fusion protein. Under the current model, the protein has at least 3 conformational states: pre-fusion native state, pre-hairpin intermediate state, and post-fusion hairpin state. During viral and target cell membrane fusion, the coiled coil regions (heptad repeats) assume a trimer-of-hairpins structure, positioning the fusion peptide in close proximity to the C-terminal region of the ectodomain. The formation of this structure appears to drive apposition and subsequent fusion of viral and target cell membranes. Membranes fusion leads to delivery of the nucleocapsid into the cytoplasm. This Homo sapiens (Human) protein is Envelope glycoprotein (env).